We begin with the raw amino-acid sequence, 670 residues long: ATP synthase subunit alpha 2 (670 aa).

ATP is bound at residue 180-187 (GDRATGKT). The interval 527-670 (AEDAAGDIGG…DAEAEARHKR (144 aa)) is disordered. Positions 543-588 (ARGDADRDADHGANREVSREVSPEASREVSREVSREVSHEADRDAA) are enriched in basic and acidic residues. Over residues 589-599 (ADAARVAGRAP) the composition is skewed to low complexity. Positions 621 to 639 (ADGDRASASRPRPDARGDA) are enriched in basic and acidic residues. The segment covering 640-661 (ARTAPSPQGGAEVNVNAAANVD) has biased composition (low complexity).

This sequence belongs to the ATPase alpha/beta chains family. In terms of assembly, F-type ATPases have 2 components, CF(1) - the catalytic core - and CF(0) - the membrane proton channel. CF(1) has five subunits: alpha(3), beta(3), gamma(1), delta(1), epsilon(1). CF(0) has three main subunits: a(1), b(2) and c(9-12). The alpha and beta chains form an alternating ring which encloses part of the gamma chain. CF(1) is attached to CF(0) by a central stalk formed by the gamma and epsilon chains, while a peripheral stalk is formed by the delta and b chains.

The protein resides in the cell inner membrane. The catalysed reaction is ATP + H2O + 4 H(+)(in) = ADP + phosphate + 5 H(+)(out). Its function is as follows. Produces ATP from ADP in the presence of a proton gradient across the membrane. The alpha chain is a regulatory subunit. The protein is ATP synthase subunit alpha 2 of Burkholderia pseudomallei (strain 668).